We begin with the raw amino-acid sequence, 715 residues long: Phosphoribosylformylglycinamidine synthase subunit PurL (715 aa).

Residue H33 is part of the active site. Y36 provides a ligand contact to ATP. E77 is a Mg(2+) binding site. Substrate contacts are provided by residues 78-81 and R100; that span reads SHNH. H79 (proton acceptor) is an active-site residue. D101 provides a ligand contact to Mg(2+). Position 225 (Q225) interacts with substrate. A Mg(2+)-binding site is contributed by D253. Residue 297-299 coordinates substrate; it reads ESQ. 2 residues coordinate ATP: N476 and G513. Mg(2+) is bound at residue N514. Residue S516 participates in substrate binding.

The protein belongs to the FGAMS family. Monomer. Part of the FGAM synthase complex composed of 1 PurL, 1 PurQ and 2 PurS subunits.

Its subcellular location is the cytoplasm. The enzyme catalyses N(2)-formyl-N(1)-(5-phospho-beta-D-ribosyl)glycinamide + L-glutamine + ATP + H2O = 2-formamido-N(1)-(5-O-phospho-beta-D-ribosyl)acetamidine + L-glutamate + ADP + phosphate + H(+). It participates in purine metabolism; IMP biosynthesis via de novo pathway; 5-amino-1-(5-phospho-D-ribosyl)imidazole from N(2)-formyl-N(1)-(5-phospho-D-ribosyl)glycinamide: step 1/2. Functionally, part of the phosphoribosylformylglycinamidine synthase complex involved in the purines biosynthetic pathway. Catalyzes the ATP-dependent conversion of formylglycinamide ribonucleotide (FGAR) and glutamine to yield formylglycinamidine ribonucleotide (FGAM) and glutamate. The FGAM synthase complex is composed of three subunits. PurQ produces an ammonia molecule by converting glutamine to glutamate. PurL transfers the ammonia molecule to FGAR to form FGAM in an ATP-dependent manner. PurS interacts with PurQ and PurL and is thought to assist in the transfer of the ammonia molecule from PurQ to PurL. The protein is Phosphoribosylformylglycinamidine synthase subunit PurL of Methanosarcina barkeri (strain Fusaro / DSM 804).